Here is a 66-residue protein sequence, read N- to C-terminus: ATP synthase F(0) complex subunit 8 (66 aa).

A helical transmembrane segment spans residues 8-24; the sequence is IWLLAVVIVLTTLMIFL. Lysine 54 is subject to N6-acetyllysine; alternate. At lysine 54 the chain carries N6-succinyllysine; alternate. Lysine 57 is modified (N6-acetyllysine).

It belongs to the ATPase protein 8 family. Component of the ATP synthase complex composed at least of ATP5F1A/subunit alpha, ATP5F1B/subunit beta, ATP5MC1/subunit c (homooctomer), MT-ATP6/subunit a, MT-ATP8/subunit 8, ATP5ME/subunit e, ATP5MF/subunit f, ATP5MG/subunit g, ATP5MK/subunit k, ATP5MJ/subunit j, ATP5F1C/subunit gamma, ATP5F1D/subunit delta, ATP5F1E/subunit epsilon, ATP5PF/subunit F6, ATP5PB/subunit b, ATP5PD/subunit d, ATP5PO/subunit OSCP. ATP synthase complex consists of a soluble F(1) head domain (subunits alpha(3) and beta(3)) - the catalytic core - and a membrane F(0) domain - the membrane proton channel (subunits c, a, 8, e, f, g, k and j). These two domains are linked by a central stalk (subunits gamma, delta, and epsilon) rotating inside the F1 region and a stationary peripheral stalk (subunits F6, b, d, and OSCP). Interacts with PRICKLE3.

It is found in the mitochondrion membrane. Subunit 8, of the mitochondrial membrane ATP synthase complex (F(1)F(0) ATP synthase or Complex V) that produces ATP from ADP in the presence of a proton gradient across the membrane which is generated by electron transport complexes of the respiratory chain. ATP synthase complex consist of a soluble F(1) head domain - the catalytic core - and a membrane F(1) domain - the membrane proton channel. These two domains are linked by a central stalk rotating inside the F(1) region and a stationary peripheral stalk. During catalysis, ATP synthesis in the catalytic domain of F(1) is coupled via a rotary mechanism of the central stalk subunits to proton translocation. In vivo, can only synthesize ATP although its ATP hydrolase activity can be activated artificially in vitro. Part of the complex F(0) domain. The protein is ATP synthase F(0) complex subunit 8 of Mammuthus primigenius (Siberian woolly mammoth).